The chain runs to 350 residues: MDANKQKALELAMKQIDKQFGKGSLVKLSDKDIEPIAAIPTGSFGLDLALGIGGIPKGRITEIYGPESSGKTTLALSIIAQAQKDGGVAAFIDAEHALDVIYAKHIGVDVDNLLVSQPDYGEQALEIVETLARSGAVDIIVIDSVAALTPKAEIEGNMGDAQVGVQARLMSQALRKLTAAIHKMNTTVVFINQIRMKIGMMGYGSPETTTGGNALKFYSSVRLDVRRIATLKQADKEVGNRVKVKVVKNKVAPPFRIAEFDIMFGKGISREGELLDYGVKLDIIDKSGAWFSYGATRLGQGKENAKEYLKSHPELAQEIEQKIKDALGVELSHMIEAIEKDEDELNLKGE.

65–72 (GPESSGKT) contacts ATP.

The protein belongs to the RecA family.

Its subcellular location is the cytoplasm. In terms of biological role, can catalyze the hydrolysis of ATP in the presence of single-stranded DNA, the ATP-dependent uptake of single-stranded DNA by duplex DNA, and the ATP-dependent hybridization of homologous single-stranded DNAs. It interacts with LexA causing its activation and leading to its autocatalytic cleavage. This Nautilia profundicola (strain ATCC BAA-1463 / DSM 18972 / AmH) protein is Protein RecA.